Consider the following 913-residue polypeptide: Collagen alpha-2(I) chain (913 aa).

Residues Ser-1 to Ala-913 are disordered. Residues Pro-10, Pro-13, Pro-35, and Pro-41 each carry the 4-hydroxyproline modification. Composition is skewed to low complexity over residues Leu-28 to Pro-67, Val-125 to Pro-154, and Pro-199 to Pro-220. The span at Gly-254–Gly-263 shows a compositional bias: gly residues. Residues Ser-264 to Ser-274 show a composition bias toward low complexity. Over residues Gly-281–Gly-303 the composition is skewed to gly residues. Residues Pro-316–Ser-332 are compositionally biased toward low complexity. 2 positions are modified to 4-hydroxyproline: Pro-338 and Pro-341. Composition is skewed to low complexity over residues Leu-367–Ala-386 and Pro-408–Gln-421. The segment covering Gly-422 to Gly-431 has biased composition (gly residues). Composition is skewed to low complexity over residues Pro-459 to Pro-476 and Glu-488 to Ala-498. Over residues Gly-499–Gly-517 the composition is skewed to gly residues. Low complexity-rich tracts occupy residues Arg-527 to Ser-574 and Val-581 to Ala-601. Over residues Lys-602 to Lys-611 the composition is skewed to basic and acidic residues. The segment covering Pro-619–Ala-629 has biased composition (low complexity). Gly residues predominate over residues Gly-639–Gly-648. The segment covering Thr-650–Thr-659 has biased composition (low complexity). Residues Gly-696–Gly-705 show a composition bias toward gly residues. 2 stretches are compositionally biased toward low complexity: residues Ser-713–Pro-740 and Leu-748–Pro-758. Positions Gly-759 to Lys-776 are enriched in gly residues. Low complexity predominate over residues Glu-782–Pro-797. Over residues Arg-807–Pro-818 the composition is skewed to basic and acidic residues. Pro residues predominate over residues Ser-883–Pro-895.

Belongs to the fibrillar collagen family. Trimers of one alpha 2(I) and two alpha 1(I) chains. Interacts (via C-terminus) with TMEM131 (via PapD-L domain); the interaction is direct and is involved in assembly and TRAPPIII ER-to-Golgi transport complex-dependent secretion of collagen. Prolines at the third position of the tripeptide repeating unit (G-X-Y) are hydroxylated in some or all of the chains. As to expression, expressed in bones.

Its subcellular location is the secreted. The protein resides in the extracellular space. The protein localises to the extracellular matrix. Its function is as follows. Type I collagen is a member of group I collagen (fibrillar forming collagen). The polypeptide is Collagen alpha-2(I) chain (Parocnus serus (Greater Haitian ground sloth)).